Reading from the N-terminus, the 493-residue chain is Neisserial heparin binding antigen (493 aa).

A signal peptide spans Met-1–Ala-22. The N-palmitoyl cysteine moiety is linked to residue Cys-23. Cys-23 carries S-diacylglycerol cysteine lipidation. The interval Gly-27–Asn-206 is disordered. The segment covering Ser-48–Ala-58 has biased composition (basic and acidic residues). Residues Pro-59–Gln-75 are compositionally biased toward low complexity. 2 stretches are compositionally biased toward polar residues: residues Asp-106–Pro-123 and Met-132–Asn-147. Over residues Ala-165–Gly-188 the composition is skewed to low complexity. Positions Arg-301–Ser-311 match the Arg-rich motif motif.

This sequence belongs to the NHBA family. The C-terminal beta-barrel forms a monomer. Cleaved in vivo by the Neisserial phase-variable autotransporter/serine protease NalP to give 2 fragments. The N-terminus remains in the cell outer membrane while the C-terminus (beginning on Ser-298) is soluble; this soluble fragment is called C2. Cleaved in vitro by human lactoferrin (LTF, between Arg-310 and Ser-311), this fragment is called C1. Recombinant and cell surface protein is cleaved by human saliva kallikrein (KLK1) between Ser-308 and Arg-309; in saliva kallikrein is more active on NHBA than lactoferrin. Human plasma kallikrein (KLKB1) cleaves in a similar manner to KLK1.

It localises to the cell outer membrane. A major human immunogenic protein detected in patients recovering from meningitidis, where it induces bactericidal antibodies. Binds human cells, heparin and heparan sulfate proteoglycan in vitro via the Arg-rich motif. Heparin-binding to this protein protects bacteria against killing by bactericidal antibodies (serum killing). The bacteria binds a number of human extracellular sialyated and/or sulfated glycans via this protein, including chondroitin sulfate, heparin and ganglioside GT3. Whole protein binds DNA. In terms of biological role, plays a role in extracellular-DNA (eDNA) mediated biofilm formation. In some strains (including cc32 strain H44/76 but not cc11 strain B16B6) eDNA stimulates biofilm formation. When NHBA is not processed by NalP, biofilm formation increases. This is probably because the number of positively charged, NHBA- and IgA-derived DNA-binding peptides on the cell surface rises, resulting in increased DNA-binding peptides and increased biofilm formation. The polypeptide is Neisserial heparin binding antigen (Neisseria meningitidis serogroup B / serotype 15 (strain H44/76)).